Here is a 221-residue protein sequence, read N- to C-terminus: MKKFIYKYSFGALLLLSGLSGLSSCCANSYGSTLAKNTAEIKEESVTLREKPDAGCKKKSSCYLRKFFSRKKPKEKTEPVLPNFKSYADPMTDSERKDLSFVVSAAADKSSIALAMAQGEIKGALSRIREIHPLALLQALAEDPALIAGMKKMQGRDWVWNIFITELSKVFSQAASLGAFSVADVAAFASTLGLDSGTVTSIVDGERWAELIDVVIQNPAI.

Positions 1 to 24 (MKKFIYKYSFGALLLLSGLSGLSS) are cleaved as a signal peptide. C25 carries the N-palmitoyl cysteine lipid modification. C25 carries S-diacylglycerol cysteine lipidation.

Belongs to the chlamydial CPn_0875/CT_734/TC_0107 family.

The protein resides in the cell membrane. This is Probable lipoprotein CT_734 from Chlamydia trachomatis serovar D (strain ATCC VR-885 / DSM 19411 / UW-3/Cx).